A 253-amino-acid polypeptide reads, in one-letter code: 5-oxoprolinase subunit A (253 aa).

The protein belongs to the LamB/PxpA family. Forms a complex composed of PxpA, PxpB and PxpC.

It catalyses the reaction 5-oxo-L-proline + ATP + 2 H2O = L-glutamate + ADP + phosphate + H(+). Its function is as follows. Catalyzes the cleavage of 5-oxoproline to form L-glutamate coupled to the hydrolysis of ATP to ADP and inorganic phosphate. The sequence is that of 5-oxoprolinase subunit A from Bacillus cereus (strain AH187).